Consider the following 393-residue polypeptide: Serine/threonine-protein kinase US3 homolog (393 aa).

The Protein kinase domain occupies phenylalanine 93 to phenylalanine 378. ATP is bound by residues phenylalanine 99–alanine 107 and lysine 122. Aspartate 206 (proton acceptor) is an active-site residue.

It belongs to the protein kinase superfamily. Ser/Thr protein kinase family. Phosphorylated by ORF47; this phosphorylation regulates subsequent phosphorylation of proteins 24 and 27 by ORF66. Autophosphorylated.

The protein localises to the host cytoplasm. It localises to the host nucleus. It catalyses the reaction L-seryl-[protein] + ATP = O-phospho-L-seryl-[protein] + ADP + H(+). It carries out the reaction L-threonyl-[protein] + ATP = O-phospho-L-threonyl-[protein] + ADP + H(+). Multifunctional serine/threonine kinase that plays a role in several processes including egress of virus particles from the nucleus, modulation of the actin cytoskeleton and inhibition of apoptosis. Phosphorylates proteins 24 and 27, two critical regulators of capsid budding from nucleus to endoplasmic reticulum, thereby facilitating virion egress. Modulates and redistributes host components of the nuclear envelope, including LMNA, emerin/EMD and the nuclear matrix protein MATR3. Phosphorylates envelope glycoprotein B (gB), probably to direct it to the cell surface. Promotes virus intracellular spread by restructuring host cell cytoskeleton. Blocks host apoptosis to extend cell survival and allow efficient viral replication. Promotes viral gene expression by phosphorylating host HDAC2 to reduce viral genome silencing. Down-regulates class I major histocompatibility complex (MHC-I) surface expression. Additionally, phosphorylates IE62 and targets it to the cytoplasm. The nuclear exclusion of IE62 enables the packaging of abundant levels of IE62 into virions. This chain is Serine/threonine-protein kinase US3 homolog (66), found in Varicella-zoster virus (strain Dumas) (HHV-3).